A 533-amino-acid chain; its full sequence is CEP295 N-terminal-like protein (533 aa).

Disordered regions lie at residues 1-40 (MQRD…TTLQ), 84-176 (RSMG…RVTR), 286-333 (LKAD…ETTE), and 370-399 (AGTS…LEDE). A coiled-coil region spans residues 40–72 (QQWKARQLQRLAEELKAEWQEARLQQVRQAERL). Residues 107-126 (KERNRAAFREERGRREEHPR) show a composition bias toward basic and acidic residues. A coiled-coil region spans residues 416 to 531 (MALRQKQKAE…ARKRLQEFQK (116 aa)).

Expressed in mature spermatozoa (at protein level). Detected in retina, lung and kidney. In brain, highly expressed in brain-stem, cerebral cortex and thalamus with lesser expression in cerebellum and hippocampus.

It is found in the cell projection. The protein resides in the cilium. In Mus musculus (Mouse), this protein is CEP295 N-terminal-like protein.